The following is a 259-amino-acid chain: Ribosomal RNA small subunit methyltransferase J (259 aa).

S-adenosyl-L-methionine contacts are provided by residues R107 to D108, E123 to R124, S159 to S160, and D177.

The protein belongs to the methyltransferase superfamily. RsmJ family.

It localises to the cytoplasm. The enzyme catalyses guanosine(1516) in 16S rRNA + S-adenosyl-L-methionine = N(2)-methylguanosine(1516) in 16S rRNA + S-adenosyl-L-homocysteine + H(+). Specifically methylates the guanosine in position 1516 of 16S rRNA. In Shewanella loihica (strain ATCC BAA-1088 / PV-4), this protein is Ribosomal RNA small subunit methyltransferase J.